We begin with the raw amino-acid sequence, 162 residues long: Inner membrane protein YbjO (162 aa).

Residues 1-23 lie on the Periplasmic side of the membrane; that stretch reads MEDETLGFFKKTSSSHARLNVPA. Residues 24–44 traverse the membrane as a helical segment; it reads LVQVAALAIIMIRGLDVLMIF. Residues 45–66 are Cytoplasmic-facing; sequence NTLGVRGIGEFIHRSVQTWSLT. Residues 67–87 traverse the membrane as a helical segment; it reads LVFLSSLVLVFIEIWCAFSLV. At 88–94 the chain is on the periplasmic side; the sequence is KGRRWAR. Residues 95 to 115 form a helical membrane-spanning segment; that stretch reads WLYLLTQITAASYLWAASLGY. Residues 116–162 are Cytoplasmic-facing; that stretch reads GYPELFSIPGESKREIFHSLMLQKLPDMLILMLLFVPSTSRRFFQLQ.

Its subcellular location is the cell inner membrane. The sequence is that of Inner membrane protein YbjO (ybjO) from Escherichia coli O157:H7.